Reading from the N-terminus, the 1170-residue chain is Glucose transport transcription regulator RGT1 (1170 aa).

Over residues 1 to 22 (MNELNTVSTNSSDSTKDGGTSN) the composition is skewed to polar residues. Disordered regions lie at residues 1–47 (MNEL…SRAC) and 77–149 (SFDR…SNSV). Residues 47–76 (CDQCRKKKIKCDYKDEKGVCSNCQRNGDRC) constitute a DNA-binding region (zn(2)-C6 fungal-type). The span at 99–108 (RTNEIQDHNN) shows a compositional bias: basic and acidic residues. The segment covering 113–138 (NTFDNSNNTLNNNTGNSGDNGINSNT) has biased composition (low complexity). A compositionally biased stretch (polar residues) spans 139 to 149 (VPSTPSRSNSV). Serine 202, serine 205, serine 208, and serine 229 each carry phosphoserine. 5 disordered regions span residues 226-254 (VQQSPITNKHTNDSGNANGSVTGSGSASG), 269-288 (APTDDHNGEQTRRSSSIPSL), 293-323 (SNSLLLGGQPQLPPPQQQSQPQAHQQKLQQG), 384-506 (AQQT…HPMT), and 944-977 (NYRPPNPPANNPTVQEGPSAMGSSPVAGNLSAAP). Residues 239-250 (SGNANGSVTGSG) show a composition bias toward low complexity. Basic and acidic residues predominate over residues 271–280 (TDDHNGEQTR). Phosphoserine is present on residues serine 283 and serine 284. 3 stretches are compositionally biased toward low complexity: residues 293–302 (SNSLLLGGQP), 309–323 (QQSQPQAHQQKLQQG), and 385–397 (QQTQRPQGQQVPQ). Residues serine 410 and serine 414 each carry the phosphoserine modification. Over residues 411 to 422 (APVSVTLSTDRL) the composition is skewed to polar residues. Low complexity predominate over residues 424–444 (GNENNNGEINNNNGSNNSGSS). Over residues 445–457 (KDTSQHSQESVTT) the composition is skewed to polar residues. Residues 473–488 (STKKRRKSYVSKKTKP) are compositionally biased toward basic residues. Polar residues predominate over residues 493–506 (SISITSKDSAHPMT). Serine 1130 is modified (phosphoserine).

The protein belongs to the EDS1/RGT1 family. Glucose-induced phosphorylation regulates the DNA-binding activity. Hyperphosphorylation in cells growing on high levels of glucose does prevents DNA-binding and dephosphorylation restores DNA-binding ability.

The protein localises to the nucleus. Its subcellular location is the cytoplasm. In terms of biological role, glucose-responsive transcription factor that regulates expression of several glucose transporter (HXT) genes in response to glucose. In the absence of glucose, it functions as a transcriptional repressor, whereas high concentrations of glucose cause it to function as a transcriptional activator. In cells growing on low levels of glucose, has a neutral role, neither repressing nor activating transcription. Binds the consensus binding site sequence 5'-CGGANNA-3', of which multiple copies are present in all HXT promoters regulated by RGT1. The polypeptide is Glucose transport transcription regulator RGT1 (RGT1) (Saccharomyces cerevisiae (strain JAY291) (Baker's yeast)).